Here is a 491-residue protein sequence, read N- to C-terminus: Cytosolic Fe-S cluster assembly factor NAR1 (491 aa).

[4Fe-4S] cluster-binding residues include Cys-20, Cys-59, Cys-62, Cys-65, Cys-177, Cys-231, Cys-412, and Cys-416.

It belongs to the NARF family. Interacts with CIA1.

The protein localises to the cytoplasm. The protein resides in the nucleus. Essential component of a cytosolic Fe/S protein assembly machinery. Required for maturation of extramitochondrial Fe/S proteins. May play a role in the transfer of pre-assembled Fe/S clusters to target apoproteins. This is Cytosolic Fe-S cluster assembly factor NAR1 (NAR1) from Saccharomyces cerevisiae (strain ATCC 204508 / S288c) (Baker's yeast).